Reading from the N-terminus, the 843-residue chain is Aconitase AMT8-2 (843 aa).

258–260 (DSH) contributes to the substrate binding site. Residues Cys450, Cys513, and Cys516 each contribute to the [4Fe-4S] cluster site. Residues Arg536, Arg541, and 712–713 (SR) each bind substrate.

The protein belongs to the aconitase/IPM isomerase family.

The protein operates within mycotoxin biosynthesis. Its function is as follows. Aconitase; part of the gene clusters that mediate the biosynthesis of AM-toxins, host-selective toxins (HSTs) causing Alternaria blotch on apple, a worldwide distributed disease. AM-toxins are cyclic depsipeptides containing the 3 residues 2-hydroxy-isovaleric acid (2-HIV), dehydroalanine, L-alanine which are common for all 3 AM-toxins I to III. The fourth precursor is L-alpha-amino-methoxyphenyl-valeric acid (L-Amv) for AM-toxin I, L-alpha-amino-phenyl-valeric acid (L-Apv) for AM-toxin II, and L-alpha-amino-hydroxyphenyl-valeric acid (L-Ahv) for AM-toxin III. AM-toxins have two target sites for affecting susceptible apple cells; they cause invagination of the plasma membrane and electrolyte loss and chloroplast disorganization. The non-ribosomal peptide synthetase AMT1 contains 4 catalytic modules and is responsible for activation of each residue in AM-toxin. The aldo-keto reductase AMT2 catalyzes the conversion of 2-keto-isovaleric acid (2-KIV) to 2-hydroxy-isovaleric acid (2-HIV), one of the precursor residues incorporated by AMT1 during AM-toxin biosynthesis, by reduction of its ketone to an alcohol. The cytochrome P450 monooxygenase AMT3 and the thioesterase AMT4 are also important for AM-toxin production, but their exact function within the AM-toxin biosynthesis are not known yet. Up to 21 proteins (including AMT1 to AMT4) are predicted to be involved in AM-toxin biosynthesis since their expression ishighly up-regulated in AM-toxin-producing cultures. This chain is Aconitase AMT8-2, found in Alternaria alternata (Alternaria rot fungus).